We begin with the raw amino-acid sequence, 247 residues long: tRNA pseudouridine synthase A (247 aa).

Catalysis depends on D53, which acts as the Nucleophile. Y111 contributes to the substrate binding site.

It belongs to the tRNA pseudouridine synthase TruA family. Homodimer.

It carries out the reaction uridine(38/39/40) in tRNA = pseudouridine(38/39/40) in tRNA. Its function is as follows. Formation of pseudouridine at positions 38, 39 and 40 in the anticodon stem and loop of transfer RNAs. The sequence is that of tRNA pseudouridine synthase A from Bacillus subtilis (strain 168).